The chain runs to 545 residues: Phenylalanine--tRNA ligase beta subunit (545 aa).

In terms of domain architecture, B5 spans Leu-270 to Val-346. Mg(2+) is bound by residues Asp-324, Asp-330, Glu-333, and Asp-334.

Belongs to the phenylalanyl-tRNA synthetase beta subunit family. Type 2 subfamily. In terms of assembly, tetramer of two alpha and two beta subunits. Mg(2+) is required as a cofactor.

It localises to the cytoplasm. It carries out the reaction tRNA(Phe) + L-phenylalanine + ATP = L-phenylalanyl-tRNA(Phe) + AMP + diphosphate + H(+). This is Phenylalanine--tRNA ligase beta subunit from Methanosarcina acetivorans (strain ATCC 35395 / DSM 2834 / JCM 12185 / C2A).